The sequence spans 469 residues: Glutamate--tRNA ligase (469 aa).

The short motif at 11 to 21 is the 'HIGH' region element; the sequence is PSPTGFIHLGN. A compositionally biased stretch (basic and acidic residues) spans 116 to 131; it reads ASGEKPRYDGTWRPEP. A disordered region spans residues 116-139; sequence ASGEKPRYDGTWRPEPGKVLPTPP. Positions 243 to 247 match the 'KMSKS' region motif; that stretch reads KMSKR. K246 contacts ATP.

This sequence belongs to the class-I aminoacyl-tRNA synthetase family. Glutamate--tRNA ligase type 1 subfamily. As to quaternary structure, monomer.

The protein localises to the cytoplasm. It catalyses the reaction tRNA(Glu) + L-glutamate + ATP = L-glutamyl-tRNA(Glu) + AMP + diphosphate. Its function is as follows. Catalyzes the attachment of glutamate to tRNA(Glu) in a two-step reaction: glutamate is first activated by ATP to form Glu-AMP and then transferred to the acceptor end of tRNA(Glu). This Paraburkholderia phymatum (strain DSM 17167 / CIP 108236 / LMG 21445 / STM815) (Burkholderia phymatum) protein is Glutamate--tRNA ligase.